We begin with the raw amino-acid sequence, 170 residues long: ATP synthase subunit b (170 aa).

A helical membrane pass occupies residues 3–23 (IKILFFLALPFLAYASEHGGT).

The protein belongs to the ATPase B chain family. As to quaternary structure, F-type ATPases have 2 components, F(1) - the catalytic core - and F(0) - the membrane proton channel. F(1) has five subunits: alpha(3), beta(3), gamma(1), delta(1), epsilon(1). F(0) has three main subunits: a(1), b(2) and c(10-14). The alpha and beta chains form an alternating ring which encloses part of the gamma chain. F(1) is attached to F(0) by a central stalk formed by the gamma and epsilon chains, while a peripheral stalk is formed by the delta and b chains.

The protein resides in the cell inner membrane. In terms of biological role, f(1)F(0) ATP synthase produces ATP from ADP in the presence of a proton or sodium gradient. F-type ATPases consist of two structural domains, F(1) containing the extramembraneous catalytic core and F(0) containing the membrane proton channel, linked together by a central stalk and a peripheral stalk. During catalysis, ATP synthesis in the catalytic domain of F(1) is coupled via a rotary mechanism of the central stalk subunits to proton translocation. Functionally, component of the F(0) channel, it forms part of the peripheral stalk, linking F(1) to F(0). The protein is ATP synthase subunit b of Campylobacter concisus (strain 13826).